Here is a 147-residue protein sequence, read N- to C-terminus: Large ribosomal subunit protein uL13 (147 aa).

The protein belongs to the universal ribosomal protein uL13 family. In terms of assembly, part of the 50S ribosomal subunit.

Its function is as follows. This protein is one of the early assembly proteins of the 50S ribosomal subunit, although it is not seen to bind rRNA by itself. It is important during the early stages of 50S assembly. This Arthrobacter sp. (strain FB24) protein is Large ribosomal subunit protein uL13.